Consider the following 294-residue polypeptide: Basic endochitinase (294 aa).

Residues M1–A24 form the signal peptide. The GH18 domain maps to G25–V294. Intrachain disulfides connect C44–C91 and C74–C81. The active-site Proton donor is E151. C182 and C211 are joined by a disulfide.

Belongs to the glycosyl hydrolase 18 family. Chitinase class II subfamily.

It carries out the reaction Random endo-hydrolysis of N-acetyl-beta-D-glucosaminide (1-&gt;4)-beta-linkages in chitin and chitodextrins.. Its function is as follows. This protein functions as a defense against chitin containing fungal pathogens. This Nicotiana tabacum (Common tobacco) protein is Basic endochitinase.